Reading from the N-terminus, the 547-residue chain is Glucose-6-phosphate isomerase 2 (547 aa).

Residue Glu-351 is the Proton donor of the active site. Residues His-382 and Lys-508 contribute to the active site.

This sequence belongs to the GPI family.

The protein resides in the cytoplasm. The catalysed reaction is alpha-D-glucose 6-phosphate = beta-D-fructose 6-phosphate. Its pathway is carbohydrate biosynthesis; gluconeogenesis. It functions in the pathway carbohydrate degradation; glycolysis; D-glyceraldehyde 3-phosphate and glycerone phosphate from D-glucose: step 2/4. Catalyzes the reversible isomerization of glucose-6-phosphate to fructose-6-phosphate. This chain is Glucose-6-phosphate isomerase 2, found in Neisseria meningitidis serogroup A / serotype 4A (strain DSM 15465 / Z2491).